We begin with the raw amino-acid sequence, 249 residues long: MADS-box transcription factor 17 (249 aa).

An MADS-box domain is found at 1–61; that stretch reads MGRGRVELKR…GKLYEFGSAG (61 aa). The K-box domain occupies 88-178; that stretch reads HQSWYQEMSR…KNKLEAEADS (91 aa). Positions 228–249 are disordered; it reads ANPRSNGGGGDQNNNFVMGWPL.

As to quaternary structure, may interact with the K-box of MADS6. As to expression, expressed in the floral meristem, lodicule, palea, lemma, receptacle, empty glume, stamen, pistil, and ovule.

The protein localises to the nucleus. Probable transcription factor. Plays minor but redundant roles with MADS6 in floral development. This is MADS-box transcription factor 17 (MADS17) from Oryza sativa subsp. japonica (Rice).